Consider the following 443-residue polypeptide: MDRISSLPDEILEHILSFLSTKEAALTSSLSTRWKNVFVFVPSLHLDYARQHENPREFIDFVDFVNTLFNRKGNSPIKKLALKIHLKDNQSLQNQTHVQSWIHRVLSRGGVTDLDLFITFKGKFQLVPLLIFKSNTLVKLRLGRGFTIKLCHENVYLPMLKTLCLDTVDFDGDHNVFETLLPRCPLLEELVLEDQRWKQWCGSVSSPSLKRLRIRFFHIPIISLDVPGLVYLELSCIFGSKYANVNLDSLVEARLNHWVEEQELRKLRDGSSHLVPADMMDLITGIRKVKVLHLTSDALELFYFSGQELPMFDNLVYLSIASDKKQGWQILPLLIKNSPNLETLVFKGLEHYTTKQCGDACVCSGILGKSSSCLSSSRVKVLEIWSYQGTSKELKQMGHFLMKLQFLELVKIRAVSNLQVPIDIQYLLKLPRASSNCKIQAIF.

Positions 1 to 47 (MDRISSLPDEILEHILSFLSTKEAALTSSLSTRWKNVFVFVPSLHLD) constitute an F-box domain. LRR repeat units lie at residues 139–167 (KLRL…CLDT), 169–194 (DFDG…VLED), 201–236 (CGSV…ELSC), 271–296 (SSHL…HLTS), 323–348 (DKKQ…VFKG), and 363–389 (CSGI…SYQG).

The chain is F-box/LRR-repeat protein At2g42720 from Arabidopsis thaliana (Mouse-ear cress).